Consider the following 229-residue polypeptide: Cytochrome c oxidase subunit 2 (229 aa).

Topologically, residues 1–26 are mitochondrial intermembrane; it reads MSTWANLGLQDSASPLMEQLIFFHDH. Residues 27–48 traverse the membrane as a helical segment; that stretch reads ALLILVMITVLVGYLMFMLFFN. Residues 49 to 62 are Mitochondrial matrix-facing; sequence SYVNRFLLHGQLIE. Residues 63–82 form a helical membrane-spanning segment; it reads MIWTILPAIILLFIAMPSLR. The Mitochondrial intermembrane segment spans residues 83-229; the sequence is LLYLLDEINE…IKWISNSVNS (147 aa). 6 residues coordinate Cu cation: histidine 161, cysteine 196, glutamate 198, cysteine 200, histidine 204, and methionine 207. Residue glutamate 198 participates in Mg(2+) binding.

Belongs to the cytochrome c oxidase subunit 2 family. As to quaternary structure, component of the cytochrome c oxidase (complex IV, CIV), a multisubunit enzyme composed of a catalytic core of 3 subunits and several supernumerary subunits. The complex exists as a monomer or a dimer and forms supercomplexes (SCs) in the inner mitochondrial membrane with ubiquinol-cytochrome c oxidoreductase (cytochrome b-c1 complex, complex III, CIII). The cofactor is Cu cation.

Its subcellular location is the mitochondrion inner membrane. It catalyses the reaction 4 Fe(II)-[cytochrome c] + O2 + 8 H(+)(in) = 4 Fe(III)-[cytochrome c] + 2 H2O + 4 H(+)(out). In terms of biological role, component of the cytochrome c oxidase, the last enzyme in the mitochondrial electron transport chain which drives oxidative phosphorylation. The respiratory chain contains 3 multisubunit complexes succinate dehydrogenase (complex II, CII), ubiquinol-cytochrome c oxidoreductase (cytochrome b-c1 complex, complex III, CIII) and cytochrome c oxidase (complex IV, CIV), that cooperate to transfer electrons derived from NADH and succinate to molecular oxygen, creating an electrochemical gradient over the inner membrane that drives transmembrane transport and the ATP synthase. Cytochrome c oxidase is the component of the respiratory chain that catalyzes the reduction of oxygen to water. Electrons originating from reduced cytochrome c in the intermembrane space (IMS) are transferred via the dinuclear copper A center (CU(A)) of subunit 2 and heme A of subunit 1 to the active site in subunit 1, a binuclear center (BNC) formed by heme A3 and copper B (CU(B)). The BNC reduces molecular oxygen to 2 water molecules using 4 electrons from cytochrome c in the IMS and 4 protons from the mitochondrial matrix. This is Cytochrome c oxidase subunit 2 (mt:CoII) from Drosophila affinis (Fruit fly).